A 374-amino-acid polypeptide reads, in one-letter code: Alpha-galactosylglucosyldiacylglycerol synthase (374 aa).

The protein belongs to the glycosyltransferase group 1 family. Glycosyltransferase 4 subfamily. It depends on Mg(2+) as a cofactor.

The protein resides in the cell membrane. The enzyme catalyses a 1,2-diacyl-3-O-(alpha-D-glucopyranosyl)-sn-glycerol + UDP-alpha-D-galactose = a 1,2-diacyl-3-O-[alpha-D-galactopyranosyl-(1-&gt;2)-alpha-D-glucopyranosyl]-sn-glycerol + UDP + H(+). Activated by the negatively charged lipid phosphatidylglycerol (PG). Galactosyltransferase involved in the biosynthesis of the bilayer-forming membrane lipid alpha-galactosyl-glucosyldiacylglycerol which is involved in maintaining constant nonbilayer/bilayer conditions (curvature packing stress). Also involved in the beta-lactam resistance. Catalyzes the transfer of a galactosyl residue from UDP-Gal to alpha-glucosyl-DAG (1,2-diacyl-3-O-(alpha-D-glucopyranosyl)-sn-glycerol) acceptor to form the corresponding galactosyl-glycosyl-DAG product (3-O-alpha-(D-galactopyranosyl-alpha-(1-&gt;2)-D-glucopyranosyl)-1,2-diacyl-sn-glycerol). It can only use UDP-Gal as sugar donor and alpha-glucosyl-DAG is the preferred sugar acceptor. The chain is Alpha-galactosylglucosyldiacylglycerol synthase (cpoA) from Streptococcus pneumoniae (strain ATCC BAA-255 / R6).